A 513-amino-acid polypeptide reads, in one-letter code: ATP synthase subunit alpha 2 (513 aa).

169 to 176 provides a ligand contact to ATP; that stretch reads GDRQCGKT.

The protein belongs to the ATPase alpha/beta chains family. In terms of assembly, F-type ATPases have 2 components, CF(1) - the catalytic core - and CF(0) - the membrane proton channel. CF(1) has five subunits: alpha(3), beta(3), gamma(1), delta(1), epsilon(1). CF(0) has three main subunits: a(1), b(2) and c(9-12). The alpha and beta chains form an alternating ring which encloses part of the gamma chain. CF(1) is attached to CF(0) by a central stalk formed by the gamma and epsilon chains, while a peripheral stalk is formed by the delta and b chains.

The protein localises to the cell inner membrane. The catalysed reaction is ATP + H2O + 4 H(+)(in) = ADP + phosphate + 5 H(+)(out). Its function is as follows. Produces ATP from ADP in the presence of a proton gradient across the membrane. The alpha chain is a regulatory subunit. The chain is ATP synthase subunit alpha 2 from Paraburkholderia xenovorans (strain LB400).